The chain runs to 243 residues: Phosphoribosyl isomerase A (243 aa).

The active-site Proton acceptor is the Asp9. Residue Asp128 is the Proton donor of the active site.

Belongs to the HisA/HisF family.

The protein localises to the cytoplasm. The enzyme catalyses 1-(5-phospho-beta-D-ribosyl)-5-[(5-phospho-beta-D-ribosylamino)methylideneamino]imidazole-4-carboxamide = 5-[(5-phospho-1-deoxy-D-ribulos-1-ylimino)methylamino]-1-(5-phospho-beta-D-ribosyl)imidazole-4-carboxamide. The catalysed reaction is N-(5-phospho-beta-D-ribosyl)anthranilate = 1-(2-carboxyphenylamino)-1-deoxy-D-ribulose 5-phosphate. It participates in amino-acid biosynthesis; L-histidine biosynthesis; L-histidine from 5-phospho-alpha-D-ribose 1-diphosphate: step 4/9. Its pathway is amino-acid biosynthesis; L-tryptophan biosynthesis; L-tryptophan from chorismate: step 3/5. Functionally, involved in both the histidine and tryptophan biosynthetic pathways. This Mycobacterium avium (strain 104) protein is Phosphoribosyl isomerase A.